The chain runs to 160 residues: Dysbindin domain-containing protein 1 (160 aa).

Ser-3, Ser-97, and Ser-121 each carry phosphoserine. A disordered region spans residues 95–160 (ADSDDENLAT…FLTVEEPKED (66 aa)). The span at 127-143 (TRAEQNREKQPPSDPER) shows a compositional bias: basic and acidic residues.

Belongs to the dysbindin family.

This is Dysbindin domain-containing protein 1 (Dbndd1) from Mus musculus (Mouse).